The sequence spans 340 residues: Ketol-acid reductoisomerase (NADP(+)) (340 aa).

A KARI N-terminal Rossmann domain is found at 1-183 (MAITVYYDKD…GGGRTGIIET (183 aa)). NADP(+) is bound by residues 26-29 (FGSQ), Arg49, Ser52, Ser54, and 84-87 (DEIQ). His109 is a catalytic residue. NADP(+) is bound at residue Gly135. The KARI C-terminal knotted domain maps to 184 to 329 (TFKAETETDL…RNLRAMMPWI (146 aa)). Mg(2+) is bound by residues Asp192, Glu196, Glu228, and Glu232. Substrate is bound at residue Ser253.

The protein belongs to the ketol-acid reductoisomerase family. Mg(2+) is required as a cofactor.

It catalyses the reaction (2R)-2,3-dihydroxy-3-methylbutanoate + NADP(+) = (2S)-2-acetolactate + NADPH + H(+). The enzyme catalyses (2R,3R)-2,3-dihydroxy-3-methylpentanoate + NADP(+) = (S)-2-ethyl-2-hydroxy-3-oxobutanoate + NADPH + H(+). The protein operates within amino-acid biosynthesis; L-isoleucine biosynthesis; L-isoleucine from 2-oxobutanoate: step 2/4. It functions in the pathway amino-acid biosynthesis; L-valine biosynthesis; L-valine from pyruvate: step 2/4. Its function is as follows. Involved in the biosynthesis of branched-chain amino acids (BCAA). Catalyzes an alkyl-migration followed by a ketol-acid reduction of (S)-2-acetolactate (S2AL) to yield (R)-2,3-dihydroxy-isovalerate. In the isomerase reaction, S2AL is rearranged via a Mg-dependent methyl migration to produce 3-hydroxy-3-methyl-2-ketobutyrate (HMKB). In the reductase reaction, this 2-ketoacid undergoes a metal-dependent reduction by NADPH to yield (R)-2,3-dihydroxy-isovalerate. This Campylobacter jejuni subsp. doylei (strain ATCC BAA-1458 / RM4099 / 269.97) protein is Ketol-acid reductoisomerase (NADP(+)).